Here is a 113-residue protein sequence, read N- to C-terminus: UPF0102 protein Shal_4069 (113 aa).

Belongs to the UPF0102 family.

The polypeptide is UPF0102 protein Shal_4069 (Shewanella halifaxensis (strain HAW-EB4)).